The following is a 473-amino-acid chain: MAIHPLDVVIMAAGKGTRMKSSLPKVLHRLGGRALLAHVLDCAAQLSARQAVVITGHGAMEVEAACARRTGASADLSLKFVRQEPQLGTGHAVQQALPVLPDDGITLVLSGDVPLTQAATLQALLAQCDGQRLALLTLSMADPAGYGRIVRAGTQASAQVRAIVEHKDASEAERAIHEIYSGIMAVPTRLLRRWLARLDNDNVQNEYYLTDIVKFAVADGVAVVAHQITDAAQVAGVNSPVQLAELERVYQQRLATTLMEQGVRLADPARLDVRGQLTCGQDVEIDVNCVFDGRVSLGQGVRIGANCVIANAAIAAGAVIHPFTHIDGEKLGVQVGEGAMVGPFARLRPGANLGAEVHIGNFVEVKNSTLARGAKANHLAYLGDATVGERVNYGAGSITANYDGANKHRTVIEADVHIGSNCVLVAPVTIGAGATVGGGSTITRDVPAGALSVGRGRQVSIANWARPVKKPGV.

The interval methionine 1–proline 240 is pyrophosphorylase. UDP-N-acetyl-alpha-D-glucosamine is bound by residues lysine 25, glutamine 83, glycine 88 to threonine 89, serine 110 to aspartate 112, glycine 147, glutamate 165, and asparagine 238. Mg(2+) is bound at residue aspartate 112. Asparagine 238 serves as a coordination point for Mg(2+). The interval valine 241–glutamine 261 is linker. The tract at residues glycine 262 to valine 473 is N-acetyltransferase. 2 residues coordinate UDP-N-acetyl-alpha-D-glucosamine: arginine 348 and lysine 366. The Proton acceptor role is filled by histidine 378. UDP-N-acetyl-alpha-D-glucosamine-binding residues include tyrosine 381 and asparagine 392. Residues alanine 395, asparagine 401–tyrosine 402, serine 420, glycine 438, and arginine 455 each bind acetyl-CoA.

It in the N-terminal section; belongs to the N-acetylglucosamine-1-phosphate uridyltransferase family. This sequence in the C-terminal section; belongs to the transferase hexapeptide repeat family. As to quaternary structure, homotrimer. Mg(2+) is required as a cofactor.

The protein localises to the cytoplasm. The catalysed reaction is alpha-D-glucosamine 1-phosphate + acetyl-CoA = N-acetyl-alpha-D-glucosamine 1-phosphate + CoA + H(+). It carries out the reaction N-acetyl-alpha-D-glucosamine 1-phosphate + UTP + H(+) = UDP-N-acetyl-alpha-D-glucosamine + diphosphate. It functions in the pathway nucleotide-sugar biosynthesis; UDP-N-acetyl-alpha-D-glucosamine biosynthesis; N-acetyl-alpha-D-glucosamine 1-phosphate from alpha-D-glucosamine 6-phosphate (route II): step 2/2. It participates in nucleotide-sugar biosynthesis; UDP-N-acetyl-alpha-D-glucosamine biosynthesis; UDP-N-acetyl-alpha-D-glucosamine from N-acetyl-alpha-D-glucosamine 1-phosphate: step 1/1. Its pathway is bacterial outer membrane biogenesis; LPS lipid A biosynthesis. Functionally, catalyzes the last two sequential reactions in the de novo biosynthetic pathway for UDP-N-acetylglucosamine (UDP-GlcNAc). The C-terminal domain catalyzes the transfer of acetyl group from acetyl coenzyme A to glucosamine-1-phosphate (GlcN-1-P) to produce N-acetylglucosamine-1-phosphate (GlcNAc-1-P), which is converted into UDP-GlcNAc by the transfer of uridine 5-monophosphate (from uridine 5-triphosphate), a reaction catalyzed by the N-terminal domain. The sequence is that of Bifunctional protein GlmU from Polaromonas naphthalenivorans (strain CJ2).